The following is a 696-amino-acid chain: GPI mannosyltransferase 4 (696 aa).

6 helical membrane passes run 100–120 (WQLE…IYTL), 125–142 (NDYC…RFEI), 149–169 (SSWI…EMAM), 185–205 (NTVV…ESIS), 227–247 (AMST…LFGA), and 338–358 (YVHL…ASLG).

This sequence belongs to the glycosyltransferase 22 family. PIGZ subfamily.

Its subcellular location is the endoplasmic reticulum membrane. The protein operates within glycolipid biosynthesis; glycosylphosphatidylinositol-anchor biosynthesis. Mannosyltransferase involved in glycosylphosphatidylinositol-anchor biosynthesis. Transfers a fourth mannose to some trimannosyl-GPIs during GPI precursor assembly. The sequence is that of GPI mannosyltransferase 4 from Drosophila melanogaster (Fruit fly).